The primary structure comprises 92 residues: Defensin alpha 4 (92 aa).

A signal peptide spans 1–19; sequence MKTLVLLSALVLLAFQVQA. The propeptide occupies 20–58; it reads DPIQNTDEETKTEEQPGEEDQAVSISFGGQEGSALHEKS. Residues 23 to 42 are disordered; it reads QNTDEETKTEEQPGEEDQAV. Cystine bridges form between cysteine 64/cysteine 89, cysteine 66/cysteine 81, and cysteine 71/cysteine 88.

Belongs to the alpha-defensin family. Paneth cells of the small bowel.

It localises to the secreted. The protein resides in the cytoplasmic vesicle. The protein localises to the secretory vesicle. Host-defense peptide that has antimicrobial activity. Exhibits activity against Gram-negative E.coli (in vitro). Probably contributes to the antimicrobial barrier function of the small bowel mucosa. This is Defensin alpha 4 from Mus musculus (Mouse).